The sequence spans 223 residues: Deoxyribose-phosphate aldolase 2 (223 aa).

Catalysis depends on D92, which acts as the Proton donor/acceptor. K154 serves as the catalytic Schiff-base intermediate with acetaldehyde. K183 serves as the catalytic Proton donor/acceptor.

This sequence belongs to the DeoC/FbaB aldolase family. DeoC type 1 subfamily.

The protein resides in the cytoplasm. The catalysed reaction is 2-deoxy-D-ribose 5-phosphate = D-glyceraldehyde 3-phosphate + acetaldehyde. It participates in carbohydrate degradation; 2-deoxy-D-ribose 1-phosphate degradation; D-glyceraldehyde 3-phosphate and acetaldehyde from 2-deoxy-alpha-D-ribose 1-phosphate: step 2/2. Catalyzes a reversible aldol reaction between acetaldehyde and D-glyceraldehyde 3-phosphate to generate 2-deoxy-D-ribose 5-phosphate. This chain is Deoxyribose-phosphate aldolase 2, found in Oceanobacillus iheyensis (strain DSM 14371 / CIP 107618 / JCM 11309 / KCTC 3954 / HTE831).